Consider the following 111-residue polypeptide: Large ribosomal subunit protein P2 (111 aa).

The tract at residues A81–D111 is disordered. S101 is modified (phosphoserine).

The protein belongs to the eukaryotic ribosomal protein P1/P2 family. In terms of assembly, P1 and P2 exist as dimers at the large ribosomal subunit.

In terms of biological role, plays an important role in the elongation step of protein synthesis. The protein is Large ribosomal subunit protein P2 of Aspergillus fumigatus (strain ATCC MYA-4609 / CBS 101355 / FGSC A1100 / Af293) (Neosartorya fumigata).